The sequence spans 182 residues: UPF0316 protein lp_1140 (182 aa).

3 helical membrane passes run 1-21, 36-56, and 62-82; these read MHID…YITL, FAAF…SLVL, and PINL…GMVI.

The protein belongs to the UPF0316 family.

It localises to the cell membrane. The polypeptide is UPF0316 protein lp_1140 (Lactiplantibacillus plantarum (strain ATCC BAA-793 / NCIMB 8826 / WCFS1) (Lactobacillus plantarum)).